The primary structure comprises 719 residues: Fatty acid oxidation complex subunit alpha (719 aa).

The enoyl-CoA hydratase/isomerase stretch occupies residues 1 to 190 (MVYQGNRITV…KLGLVDATVA (190 aa)). Residue Asp298 coordinates substrate. Residues 313–719 (HDINEAAVLG…AAGETFYATA (407 aa)) form a 3-hydroxyacyl-CoA dehydrogenase region. NAD(+) is bound by residues Met326, Asp345, 402-404 (VVE), Lys409, and Ser431. His452 serves as the catalytic For 3-hydroxyacyl-CoA dehydrogenase activity. Asn455 contributes to the NAD(+) binding site. Asn502 serves as a coordination point for substrate.

It in the N-terminal section; belongs to the enoyl-CoA hydratase/isomerase family. In the C-terminal section; belongs to the 3-hydroxyacyl-CoA dehydrogenase family. As to quaternary structure, heterotetramer of two alpha chains (FadB) and two beta chains (FadA).

It catalyses the reaction a (3S)-3-hydroxyacyl-CoA + NAD(+) = a 3-oxoacyl-CoA + NADH + H(+). The catalysed reaction is a (3S)-3-hydroxyacyl-CoA = a (2E)-enoyl-CoA + H2O. It carries out the reaction a 4-saturated-(3S)-3-hydroxyacyl-CoA = a (3E)-enoyl-CoA + H2O. The enzyme catalyses (3S)-3-hydroxybutanoyl-CoA = (3R)-3-hydroxybutanoyl-CoA. It catalyses the reaction a (3Z)-enoyl-CoA = a 4-saturated (2E)-enoyl-CoA. The catalysed reaction is a (3E)-enoyl-CoA = a 4-saturated (2E)-enoyl-CoA. The protein operates within lipid metabolism; fatty acid beta-oxidation. Functionally, involved in the aerobic and anaerobic degradation of long-chain fatty acids via beta-oxidation cycle. Catalyzes the formation of 3-oxoacyl-CoA from enoyl-CoA via L-3-hydroxyacyl-CoA. It can also use D-3-hydroxyacyl-CoA and cis-3-enoyl-CoA as substrate. The sequence is that of Fatty acid oxidation complex subunit alpha from Psychrobacter cryohalolentis (strain ATCC BAA-1226 / DSM 17306 / VKM B-2378 / K5).